Consider the following 682-residue polypeptide: Potassium-transporting ATPase ATP-binding subunit (682 aa).

Transmembrane regions (helical) follow at residues 34 to 54 (PVMF…IAMA), 62 to 82 (ALFS…ANFA), 219 to 239 (IALT…TATL), and 254 to 274 (VLVA…LSAI). Asp-307 acts as the 4-aspartylphosphate intermediate in catalysis. ATP contacts are provided by residues Asp-344, Glu-348, 377–384 (FTAQSRMS), and Lys-395. The Mg(2+) site is built by Asp-518 and Asp-522. Transmembrane regions (helical) follow at residues 588 to 608 (FAII…LNIM), 616 to 636 (AILS…PLAL), and 656 to 676 (IYGL…DLLL).

The protein belongs to the cation transport ATPase (P-type) (TC 3.A.3) family. Type IA subfamily. As to quaternary structure, the system is composed of three essential subunits: KdpA, KdpB and KdpC.

It is found in the cell inner membrane. The enzyme catalyses K(+)(out) + ATP + H2O = K(+)(in) + ADP + phosphate + H(+). Its function is as follows. Part of the high-affinity ATP-driven potassium transport (or Kdp) system, which catalyzes the hydrolysis of ATP coupled with the electrogenic transport of potassium into the cytoplasm. This subunit is responsible for energy coupling to the transport system and for the release of the potassium ions to the cytoplasm. This is Potassium-transporting ATPase ATP-binding subunit from Shigella sonnei (strain Ss046).